We begin with the raw amino-acid sequence, 402 residues long: MKKIVAIFLVFLGSLWAEDPVIDVVNSGVVLPKIIVKDNSNLSDENLKKSFYNIIVNDLKVSSNFEVVANATETSNYIFEYTLNKNGNTLSLNVKIKAGGSDKSEQTYTLNGLEQYPFLAHKSVKASVNALGLAPVDWMDHKILIARNSSSKKSQIIMADYTLTYQKVIVDGGLNLFPKWGNKEQTLFYYTAYDHDKPTLYRYDLNTNKASKILSSGGMVVASDVNVDGSKLLVTMAPKDQPDVYLYDLNTKNLTQLTNYSGIDVNGNFIGSDDSKVVFVSDRLGYPNIFMQDLNSNSAEQVVFHGRNNSAVSTYKDFLVYSSREPNQAGVFNIYLMSINSDYIRQLTANGKNLFPRFSSDGGSIVFIKYLGAQSALGVIRVNANKTFYFPLRVGKIQSIDW.

The signal sequence occupies residues Met1–Ala17.

The protein belongs to the TolB family. As to quaternary structure, the Tol-Pal system is composed of five core proteins: the inner membrane proteins TolA, TolQ and TolR, the periplasmic protein TolB and the outer membrane protein Pal. They form a network linking the inner and outer membranes and the peptidoglycan layer.

It is found in the periplasm. Part of the Tol-Pal system, which plays a role in outer membrane invagination during cell division and is important for maintaining outer membrane integrity. This chain is Tol-Pal system protein TolB, found in Campylobacter jejuni subsp. jejuni serotype O:2 (strain ATCC 700819 / NCTC 11168).